Consider the following 745-residue polypeptide: VCP-like ATPase (745 aa).

ATP is bound by residues 231-238 and 508-515; these read GPPGTGKT and GPPGVGKT.

Belongs to the AAA ATPase family. CDC48 subfamily. Homohexamer. Forms a ring-shaped particle.

This Thermoplasma acidophilum (strain ATCC 25905 / DSM 1728 / JCM 9062 / NBRC 15155 / AMRC-C165) protein is VCP-like ATPase (vat).